The following is a 434-amino-acid chain: Histidinol dehydrogenase (434 aa).

The NAD(+) site is built by tyrosine 130, glutamine 188, and asparagine 211. Substrate contacts are provided by serine 237, glutamine 259, and histidine 262. Zn(2+) is bound by residues glutamine 259 and histidine 262. Catalysis depends on proton acceptor residues glutamate 326 and histidine 327. Residues histidine 327, aspartate 360, glutamate 414, and histidine 419 each coordinate substrate. Residue aspartate 360 coordinates Zn(2+). Position 419 (histidine 419) interacts with Zn(2+).

It belongs to the histidinol dehydrogenase family. As to quaternary structure, homodimer. Zn(2+) is required as a cofactor.

The catalysed reaction is L-histidinol + 2 NAD(+) + H2O = L-histidine + 2 NADH + 3 H(+). It functions in the pathway amino-acid biosynthesis; L-histidine biosynthesis; L-histidine from 5-phospho-alpha-D-ribose 1-diphosphate: step 9/9. Its function is as follows. Catalyzes the sequential NAD-dependent oxidations of L-histidinol to L-histidinaldehyde and then to L-histidine. The chain is Histidinol dehydrogenase from Shigella dysenteriae serotype 1 (strain Sd197).